We begin with the raw amino-acid sequence, 110 residues long: Large ribosomal subunit protein uL24 (110 aa).

It belongs to the universal ribosomal protein uL24 family. In terms of assembly, part of the 50S ribosomal subunit.

Functionally, one of two assembly initiator proteins, it binds directly to the 5'-end of the 23S rRNA, where it nucleates assembly of the 50S subunit. In terms of biological role, one of the proteins that surrounds the polypeptide exit tunnel on the outside of the subunit. The protein is Large ribosomal subunit protein uL24 of Desulfovibrio desulfuricans (strain ATCC 27774 / DSM 6949 / MB).